The following is a 620-amino-acid chain: Nuclear cap-binding protein subunit 3 (620 aa).

Lys12 participates in a covalent cross-link: Glycyl lysine isopeptide (Lys-Gly) (interchain with G-Cter in SUMO2). The segment covering 15–28 (APAGPALGLPSPEA) has biased composition (low complexity). Residues 15 to 42 (APAGPALGLPSPEAESGVDRGEPEPMEV) form a disordered region. Ser25 is modified (phosphoserine). A Glycyl lysine isopeptide (Lys-Gly) (interchain with G-Cter in SUMO2) cross-link involves residue Lys70. Position 73 is a phosphoserine (Ser73). An RNA recognition motif (RRM) domain region spans residues 126 to 187 (ETIYICGVDE…MSSLPAQDKI (62 aa)). The WLDD motif; essential for 7-methylguanosine-containing mRNA cap binding signature appears at 155–158 (WLDD). The span at 185 to 198 (DKIRSRDASEDKSA) shows a compositional bias: basic and acidic residues. Disordered regions lie at residues 185-233 (DKIR…LDTL), 332-419 (HSGL…PKKS), and 436-620 (IRNS…EAES). A Glycyl lysine isopeptide (Lys-Gly) (interchain with G-Cter in SUMO2) cross-link involves residue Lys186. Ser209 and Ser210 each carry phosphoserine. Composition is skewed to acidic residues over residues 209-230 (SSDD…DVEL) and 341-365 (EPIE…DMDA). Positions 366-388 (DDRVVVEYHEELPALKQPRERSA) are enriched in basic and acidic residues. A Phosphothreonine modification is found at Thr413. Ser415 carries the phosphoserine modification. Basic and acidic residues-rich tracts occupy residues 459 to 474 (PPEK…DEKR) and 511 to 521 (VRREPSSDVHS). Lys541 is covalently cross-linked (Glycyl lysine isopeptide (Lys-Gly) (interchain with G-Cter in SUMO2)). Composition is skewed to basic and acidic residues over residues 554-569 (KTKE…RAPG) and 585-598 (IKEK…KSRL). Positions 611 to 620 (ESSSGSEAES) are enriched in low complexity. Ser620 is modified (phosphoserine).

This sequence belongs to the NCBP3 family. Component of an alternative cap-binding complex (CBC) composed of NCBP1/CBP80 and NCBP3. Interacts with SRRT, KPNA3, THOC5 and EIF4A3.

Its subcellular location is the nucleus. It localises to the cytoplasm. Its function is as follows. Associates with NCBP1/CBP80 to form an alternative cap-binding complex (CBC) which plays a key role in mRNA export. NCBP3 serves as adapter protein linking the capped RNAs (m7GpppG-capped RNA) to NCBP1/CBP80. Unlike the conventional CBC with NCBP2 which binds both small nuclear RNA (snRNA) and messenger (mRNA) and is involved in their export from the nucleus, the alternative CBC with NCBP3 does not bind snRNA and associates only with mRNA thereby playing a role in only mRNA export. The alternative CBC is particularly important in cellular stress situations such as virus infections and the NCBP3 activity is critical to inhibit virus growth. This is Nuclear cap-binding protein subunit 3 from Homo sapiens (Human).